A 305-amino-acid chain; its full sequence is Putative E3 ubiquitin-protein ligase SINAT1 (305 aa).

The RING-type zinc-finger motif lies at 57 to 93; sequence CPVCTNLMYPPIHQCPNGHTLCSSCKLRVQNTCPTCR. The interval 107–300 is SBD; it reads VAESLEVPCR…EELKLRVTGR (194 aa). The SIAH-type zinc finger occupies 110-170; it reads SLEVPCRYQN…LVDHLKDDHK (61 aa). Zn(2+)-binding residues include cysteine 115, cysteine 122, histidine 134, cysteine 138, cysteine 145, cysteine 152, histidine 164, and histidine 169.

The protein belongs to the SINA (Seven in absentia) family. In terms of assembly, interacts with SINAT6. Interacts with ATG6 and TRAF1A. Interacts with WAV3. Interacts with FREE1. Interacts with ELC/VPS23A.

It is found in the endosome. The protein localises to the multivesicular body. Its subcellular location is the cytoplasmic vesicle. The protein resides in the autophagosome. The catalysed reaction is S-ubiquitinyl-[E2 ubiquitin-conjugating enzyme]-L-cysteine + [acceptor protein]-L-lysine = [E2 ubiquitin-conjugating enzyme]-L-cysteine + N(6)-ubiquitinyl-[acceptor protein]-L-lysine.. It functions in the pathway protein modification; protein ubiquitination. Its function is as follows. E3 ubiquitin-protein ligase that mediates ubiquitination and subsequent proteasomal degradation of target proteins. E3 ubiquitin ligases accept ubiquitin from an E2 ubiquitin-conjugating enzyme in the form of a thioester and then directly transfers the ubiquitin to targeted substrates. It probably triggers the ubiquitin-mediated degradation of different substrates. Mediates the proteasomal-dependent degradation of ATG6, a component of the autophagosome complex. Requires TRAF1A/MUSE14 and TRAF1B/MUSE13 to target ATG6 for ubiquitination and subsequent regulation of autophagosome assembly. Modulates directly the ubiquitination and proteasomal-dependent degradation of FREE1, a component of the ESCRT-I complex. Modulates directly the ubiquitination and proteasomal-dependent degradation of ELC/VPS23A, a component of the ESCRT-I complex. This Arabidopsis thaliana (Mouse-ear cress) protein is Putative E3 ubiquitin-protein ligase SINAT1.